The following is an 811-amino-acid chain: TLR4 interactor with leucine rich repeats (811 aa).

The first 25 residues, 1–25 (MEAARALRLLLVVCGCLALPPLAEP), serve as a signal peptide directing secretion. An LRRNT domain is found at 26-57 (VCPERCDCQHPQHLLCTNRGLRVVPKTSSLPS). Residues 26–696 (VCPERCDCQH…AGSRGGVDYQ (671 aa)) lie on the Extracellular side of the membrane. 12 LRR repeats span residues 61-81 (VLTYSLGGNFITNITAFDFHR), 84-105 (QLRRLDLQYNQIRSLHPKTFEK), 108-129 (RLEELYLGNNLLQALAPGTLAP), 132-153 (KLRILYANGNEISRLSRGSFEG), 156-177 (SLVKLRLDGNALGALPDAVFAP), 180-201 (NLLYLHLESNRIRFLGKNAFAQ), 204-223 (KLRFLNLSANELQPSLRHAA), 230-251 (SLSSLILSANNLQHLGPRIFQH), 254-275 (RLGLLSLRGNQLTHLAPEAFWG), 278-299 (ALRELRLEGNRLSQLPTALLEP), 302-323 (SLEALDLSGNELSALHPATFGH), and 326-347 (RLRELSLRNNALSALSGDIFAA). Asparagine 73 is a glycosylation site (N-linked (GlcNAc...) asparagine). Asparagine 209 is a glycosylation site (N-linked (GlcNAc...) asparagine). Residues 359–416 (NGWTCDCRLRGLKRWMGDWHSQGRLLTVFVQCRHPPALRGKYLDYLDDQQLQNGSCAD) form the LRRCT domain. Residues 484–549 (LSRRGPGLQQ…PSPAGDPWQR (66 aa)) form a disordered region. 2 stretches are compositionally biased toward low complexity: residues 492–508 (QQPSPSVAAAAGPAPQS) and 530–544 (PTPTASPGSAPSPAG). Residue asparagine 589 is glycosylated (N-linked (GlcNAc...) asparagine). Residues 697 to 717 (LLTLALLTVNALLVLLALAAW) traverse the membrane as a helical segment. Topologically, residues 718-811 (ASRWLRRKLR…EDRLLQRFAD (94 aa)) are cytoplasmic. Serine 798 is modified (phosphoserine).

Belongs to the lipopolysaccharide (LPS) receptor, a multi-protein complex containing at least CD14, MD-2 and TLR4. Interacts with TLR4; this interaction is greatly enhanced by LPS stimulation. Interacts with LPS. Post-translationally, N-glycolysaled. In terms of tissue distribution, highly expressed in the brain, ovary, small intestine and spleen.

It localises to the membrane. Its function is as follows. Component of the TLR4 signaling complex. Mediates the innate immune response to bacterial lipopolysaccharide (LPS) leading to cytokine secretion. This is TLR4 interactor with leucine rich repeats (TRIL) from Homo sapiens (Human).